The primary structure comprises 93 residues: MFCVIYRSTKREQTYLYVEKKDDFSRVPDELMRGFGTPQMAMLLPLDGRKKLVNADLEKVKQALSEQGYYLQLPPPSENLLKKHLAEQGKQSD.

Positions 1-85 (MFCVIYRSTK…PSENLLKKHL (85 aa)) constitute a YcgL domain.

The sequence is that of YcgL domain-containing protein KPK_1976 from Klebsiella pneumoniae (strain 342).